The following is a 488-amino-acid chain: Coagulation factor X (488 aa).

Positions 1 to 31 (MGRPLHLVLLSASLAGLLLLGESLFIRREQA) are cleaved as a signal peptide. The propeptide occupies 32–40 (NNILARVTR). A Gla domain is found at 41 to 85 (ANSFLEEMKKGHLERECMEETCSYEEAREVFEDSDKTNEFWNKYK). 4-carboxyglutamate is present on residues E46, E47, E54, E56, E59, E60, E65, E66, E69, E72, and E79. C57 and C62 are joined by a disulfide. The 37-residue stretch at 86 to 122 (DGDQCETSPCQNQGKCKDGLGEYTCTCLEGFEGKNCE) folds into the EGF-like 1; calcium-binding domain. Intrachain disulfides connect C90–C101, C95–C110, C112–C121, C129–C140, C136–C149, C151–C164, C172–C342, C241–C246, C261–C277, C390–C404, and C415–C443. D103 bears the (3R)-3-hydroxyaspartate mark. Positions 125-165 (TRKLCSLDNGDCDQFCHEEQNSVVCSCARGYTLADNGKACI) constitute an EGF-like 2 domain. The tract at residues 183 to 203 (SVAQATSSSGEAPDSITWKPY) is O-glycosylated at one site. The propeptide at 183 to 234 (SVAQATSSSGEAPDSITWKPYDAADLDPTENPFDLLDFNQTQPERGDNNLTR) is activation peptide. Residues T199 and T211 are each glycosylated (O-linked (GalNAc...) threonine). N-linked (GlcNAc...) asparagine glycosylation is found at N221 and N231. The 233-residue stretch at 235-467 (IVGGQECKDG…FLKWIDRSMK (233 aa)) folds into the Peptidase S1 domain. Residues H276 and D322 each act as charge relay system in the active site. The active-site Charge relay system is the S419. Residues 476-485 (SHAPEVITSS) form an O-glycosylated at one site region.

This sequence belongs to the peptidase S1 family. In terms of assembly, the two chains are formed from a single-chain precursor by the excision of two Arg residues and are held together by 1 or more disulfide bonds. Forms a heterodimer with SERPINA5. Interacts (inactive and activated) with ixolaris, an anticoagulant protein from Ixodes scapularis saliva. Interacts (activated) with iripin-8, a serine protease inhibitor from Ixodes ricinus saliva. Interacts (activated) with FXa-directed anticoagulant from Aedes albopictus saliva. Interacts (activated) with guianensin, an anticoagulant protein from Simulium guianense saliva. Interacts (activated) with simukunin, an anticoagulant protein from Simulium vittatum saliva. Post-translationally, the vitamin K-dependent, enzymatic carboxylation of some glutamate residues allows the modified protein to bind calcium. In terms of processing, N- and O-glycosylated. O-glycosylated with core 1 or possibly core 8 glycans. Proteolytically cleaved and activated by cathepsin CTSG. The activation peptide is cleaved by factor IXa (in the intrinsic pathway), or by factor VIIa (in the extrinsic pathway). Post-translationally, the iron and 2-oxoglutarate dependent 3-hydroxylation of aspartate and asparagine is (R) stereospecific within EGF domains. Plasma; synthesized in the liver.

The protein localises to the secreted. It carries out the reaction Selective cleavage of Arg-|-Thr and then Arg-|-Ile bonds in prothrombin to form thrombin.. Its activity is regulated as follows. Inhibited by SERPINA5 and SERPINA10. Its function is as follows. Factor Xa is a vitamin K-dependent glycoprotein that converts prothrombin to thrombin in the presence of factor Va, calcium and phospholipid during blood clotting. Factor Xa activates pro-inflammatory signaling pathways in a protease-activated receptor (PAR)-dependent manner. Up-regulates expression of protease-activated receptors (PARs) F2R, F2RL1 and F2RL2 in dermal microvascular endothelial cells. Triggers the production of pro-inflammatory cytokines, such as MCP-1/CCL2 and IL6, in cardiac fibroblasts and umbilical vein endothelial cells in PAR-1/F2R-dependent manner. Triggers the production of pro-inflammatory cytokines, such as MCP-1/CCL2, IL6, TNF-alpha/TNF, IL-1beta/IL1B, IL8/CXCL8 and IL18, in endothelial cells and atrial tissues. Induces expression of adhesion molecules, such as ICAM1, VCAM1 and SELE, in endothelial cells and atrial tissues. Increases expression of phosphorylated ERK1/2 in dermal microvascular endothelial cells and atrial tissues. Triggers activation of the transcription factor NF-kappa-B in dermal microvascular endothelial cells and atrial tissues. Activates pro-inflammatory and pro-fibrotic responses in dermal fibroblasts and enhances wound healing probably via PAR-2/F2RL1-dependent mechanism. Activates barrier protective signaling responses in endothelial cells in PAR-2/F2RL1-dependent manner; the activity depends on the cleavage of PAR-2/F2RL1 by factor Xa. Up-regulates expression of plasminogen activator inhibitor 1 (SERPINE1) in atrial tissues. The protein is Coagulation factor X (F10) of Homo sapiens (Human).